The following is a 617-amino-acid chain: Leucine aminopeptidase 2 (617 aa).

A peptide is bound by residues 139–141 and 271–276; these read QCQ and PYGGME. Position 300 (His-300) interacts with Zn(2+). Glu-301 (proton acceptor) is an active-site residue. Residues His-304 and Glu-323 each coordinate Zn(2+). Tyr-388 serves as the catalytic Proton donor.

Belongs to the peptidase M1 family. Zn(2+) is required as a cofactor.

The protein resides in the cytoplasm. The protein localises to the nucleus. It carries out the reaction an epoxide + H2O = an ethanediol. Functionally, aminopeptidase that preferentially cleaves di- and tripeptides. Also has low epoxide hydrolase activity (in vitro). Can hydrolyze the epoxide leukotriene LTA(4) but it forms preferentially 5,6-dihydroxy-7,9,11,14-eicosatetraenoic acid rather than the cytokine leukotriene B(4) as the product compared to the homologous mammalian enzyme (in vitro). The protein is Leucine aminopeptidase 2 of Neosartorya fischeri (strain ATCC 1020 / DSM 3700 / CBS 544.65 / FGSC A1164 / JCM 1740 / NRRL 181 / WB 181) (Aspergillus fischerianus).